The following is a 400-amino-acid chain: Sensory histidine kinase/phosphatase NtrB (400 aa).

2 stretches are compositionally biased toward low complexity: residues 1 to 10 (MARASAAAPL) and 18 to 27 (RAPSSSYRPV). Residues 1 to 27 (MARASAAAPLPRRPARPRAPSSSYRPV) form a disordered region. One can recognise a PAS domain in the interval 29–99 (PCIDPSVMLN…IEQVQQGRHR (71 aa)). The Histidine kinase domain occupies 163-381 (MLGHEVKNPL…VFKVSLPMFD (219 aa)). His-166 carries the post-translational modification Phosphohistidine; by autocatalysis.

Post-translationally, autophosphorylated.

It is found in the cytoplasm. It carries out the reaction ATP + protein L-histidine = ADP + protein N-phospho-L-histidine.. Functionally, member of the two-component regulatory system NtrB/NtrC, which controls expression of the nitrogen-regulated (ntr) genes in response to nitrogen limitation. Under conditions of nitrogen limitation, NtrB autophosphorylates and transfers the phosphoryl group to NtrC. In the presence of nitrogen, acts as a phosphatase that dephosphorylates and inactivates NtrC. The sequence is that of Sensory histidine kinase/phosphatase NtrB from Azospirillum brasilense.